The following is a 200-amino-acid chain: dITP/XTP pyrophosphatase (200 aa).

Residue 8–13 (TRNAGK) participates in substrate binding. Asp72 acts as the Proton acceptor in catalysis. Asp72 is a Mg(2+) binding site. Substrate-binding positions include Ser73, 155-158 (FGYD), Lys178, and 183-184 (HR).

It belongs to the HAM1 NTPase family. As to quaternary structure, homodimer. Mg(2+) is required as a cofactor.

It carries out the reaction XTP + H2O = XMP + diphosphate + H(+). The catalysed reaction is dITP + H2O = dIMP + diphosphate + H(+). It catalyses the reaction ITP + H2O = IMP + diphosphate + H(+). Functionally, pyrophosphatase that catalyzes the hydrolysis of nucleoside triphosphates to their monophosphate derivatives, with a high preference for the non-canonical purine nucleotides XTP (xanthosine triphosphate), dITP (deoxyinosine triphosphate) and ITP. Seems to function as a house-cleaning enzyme that removes non-canonical purine nucleotides from the nucleotide pool, thus preventing their incorporation into DNA/RNA and avoiding chromosomal lesions. The protein is dITP/XTP pyrophosphatase of Streptomyces avermitilis (strain ATCC 31267 / DSM 46492 / JCM 5070 / NBRC 14893 / NCIMB 12804 / NRRL 8165 / MA-4680).